The primary structure comprises 318 residues: MPKRGKKGAVAEDGDELKTEPEAKKSKTAAKKNDKEAAGEGPALYEDPPDQKTSPSGKPATLKICSWNVDGLRAWIKKKGLDWVKEEAPDILCLQETKCSENKLPAELQELPGLSYQYWSAPXXKEGYSGVGLLSRQCPLKVSYGIGEEEHDQEGRVIVAEFDSFVLVTAYVPNAGRGLVRLEYRQRWDEAFRRFLKGLASRKPLVLCGDLNVAHEEIDLRNPKGNKKNAGFTPQERQGFGELLQAVPLADSFRHLYPNTPYAYTFWTYMMNARSKNVGWRLDYFLLSHSLLPALCDSKIRSKALGSDHCPITLYLAL.

The segment at 1–33 is necessary for interaction with YBX1, binding to RNA, association together with NPM1 to rRNA, endoribonuclease activity on abasic RNA and localization in the nucleoli; the sequence is MPKRGKKGAVAEDGDELKTEPEAKKSKTAAKKN. Positions 1–60 are disordered; the sequence is MPKRGKKGAVAEDGDELKTEPEAKKSKTAAKKNDKEAAGEGPALYEDPPDQKTSPSGKPA. N6-acetyllysine; by EP300 is present on residues Lys6 and Lys7. Residues 8–13 carry the Nuclear localization signal (NLS) motif; it reads GAVAED. The segment covering 16–38 has biased composition (basic and acidic residues); the sequence is ELKTEPEAKKSKTAAKKNDKEAA. Positions 23–33 are necessary for interaction with NPM1 and for efficient rRNA binding; it reads AKKSKTAAKKN. N6-acetyllysine is present on residues Lys27, Lys31, Lys32, and Lys35. Ser54 is subject to Phosphoserine. A Nuclear export signal (NES) motif is present at residues 64-80; sequence ICSWNVDGLRAWIKKKG. At Cys65 the chain carries S-nitrosocysteine; alternate. A disulfide bridge connects residues Cys65 and Cys93. Asp70 contributes to the Mg(2+) binding site. Cys93 is subject to S-nitrosocysteine; alternate. Position 96 (Glu96) interacts with Mg(2+). Tyr171 is an active-site residue. Lys197 is modified (N6-acetyllysine). Mg(2+) is bound by residues Asp210 and Asn212. Residue Asp210 is the Proton donor/acceptor of the active site. Residue Thr233 is modified to Phosphothreonine; by CDK5. A mitochondrial targeting sequence (MTS) region spans residues 289–318; it reads HSLLPALCDSKIRSKALGSDHCPITLYLAL. Asp308 is a binding site for Mg(2+). S-nitrosocysteine is present on Cys310.

It belongs to the DNA repair enzymes AP/ExoA family. Monomer. Homodimer; disulfide-linked. Component of the SET complex, composed of at least APEX1, SET, ANP32A, HMGB2, NME1 and TREX1. Associates with the dimer XRCC5/XRCC6 in a DNA-dependent manner. Interacts with SIRT1; the interaction is increased in the context of genotoxic stress. Interacts with HDAC1, HDAC2 and HDAC3; the interactions are not dependent on the APEX1 acetylation status. Interacts with XRCC1; the interaction is induced by SIRT1 and increased with the APEX1 acetylated form. Interacts with NPM1 (via N-terminal domain); the interaction is RNA-dependent and decreases in hydrogen peroxide-damaged cells. Interacts (via N-terminus) with YBX1 (via C-terminus); the interaction is increased in presence of APEX1 acetylated at Lys-6 and Lys-7. Interacts with HNRNPL; the interaction is DNA-dependent. Interacts (via N-terminus) with KPNA1 and KPNA2. Interacts with TXN; the interaction stimulates the FOS/JUN AP-1 complex DNA-binding activity in a redox-dependent manner. Interacts with GZMA, KRT8, MDM2, POLB, PRDX6, PRPF19, RPLP0, TOMM20 and WDR77. Binds to CDK5. Requires Mg(2+) as cofactor. Mn(2+) is required as a cofactor. In terms of processing, phosphorylated. Phosphorylation by kinase PKC or casein kinase CK2 results in enhanced redox activity that stimulates binding of the FOS/JUN AP-1 complex to its cognate binding site. AP-endodeoxyribonuclease activity is not affected by CK2-mediated phosphorylation. Phosphorylation of Thr-233 by CDK5 in response to MPP(+)/MPTP (1-methyl-4-phenylpyridinium) reduces AP-endodeoxyribonuclease activity resulting in accumulation of DNA damage and contributing to neuronal death. Post-translationally, acetylated on Lys-6 and Lys-7. Acetylation is increased by the transcriptional coactivator EP300 acetyltransferase, genotoxic agents like H(2)O(2) and methyl methanesulfonate (MMS). Acetylation increases its binding affinity to the negative calcium response element (nCaRE) DNA promoter. The acetylated form induces a stronger binding of YBX1 to the Y-box sequence in the MDR1 promoter than the unacetylated form. Deacetylated on lysines. Lys-6 and Lys-7 are deacetylated by SIRT1. Cleaved at Lys-31 by granzyme A to create the mitochondrial form; leading in reduction of binding to DNA, AP endodeoxyribonuclease activity, redox activation of transcription factors and to enhanced cell death. Cleaved by granzyme K; leading to intracellular ROS accumulation and enhanced cell death after oxidative stress. In terms of processing, cys-69 and Cys-93 are nitrosylated in response to nitric oxide (NO) and lead to the exposure of the nuclear export signal (NES). Post-translationally, ubiquitinated by MDM2; leading to translocation to the cytoplasm and proteasomal degradation.

The protein resides in the nucleus. It localises to the nucleolus. It is found in the nucleus speckle. Its subcellular location is the endoplasmic reticulum. The protein localises to the cytoplasm. The protein resides in the mitochondrion. The catalysed reaction is Exonucleolytic cleavage in the 3'- to 5'-direction to yield nucleoside 5'-phosphates.. Its activity is regulated as follows. NPM1 stimulates endodeoxyribonuclease activity on double-stranded DNA with AP sites, but inhibits endoribonuclease activity on single-stranded RNA containing AP sites. Multifunctional protein that plays a central role in the cellular response to oxidative stress. The two major activities of APEX1 are DNA repair and redox regulation of transcriptional factors. Functions as an apurinic/apyrimidinic (AP) endodeoxyribonuclease in the DNA base excision repair (BER) pathway of DNA lesions induced by oxidative and alkylating agents. Initiates repair of AP sites in DNA by catalyzing hydrolytic incision of the phosphodiester backbone immediately adjacent to the damage, generating a single-strand break with 5'-deoxyribose phosphate and 3'-hydroxyl ends. Also incises at AP sites in the DNA strand of DNA/RNA hybrids, single-stranded DNA regions of R-loop structures, and single-stranded RNA molecules. Has 3'-5' exoribonuclease activity on mismatched deoxyribonucleotides at the 3' termini of nicked or gapped DNA molecules during short-patch BER. Possesses DNA 3' phosphodiesterase activity capable of removing lesions (such as phosphoglycolate) blocking the 3' side of DNA strand breaks. May also play a role in the epigenetic regulation of gene expression by participating in DNA demethylation. Acts as a loading factor for POLB onto non-incised AP sites in DNA and stimulates the 5'-terminal deoxyribose 5'-phosphate (dRp) excision activity of POLB. Plays a role in the protection from granzyme-mediated cellular repair leading to cell death. Also involved in the DNA cleavage step of class switch recombination (CSR). On the other hand, APEX1 also exerts reversible nuclear redox activity to regulate DNA binding affinity and transcriptional activity of transcriptional factors by controlling the redox status of their DNA-binding domain, such as the FOS/JUN AP-1 complex after exposure to IR. Involved in calcium-dependent down-regulation of parathyroid hormone (PTH) expression by binding to negative calcium response elements (nCaREs). Together with HNRNPL or the dimer XRCC5/XRCC6, associates with nCaRE, acting as an activator of transcriptional repression. Stimulates the YBX1-mediated MDR1 promoter activity, when acetylated at Lys-6 and Lys-7, leading to drug resistance. Also acts as an endoribonuclease involved in the control of single-stranded RNA metabolism. Plays a role in regulating MYC mRNA turnover by preferentially cleaving in between UA and CA dinucleotides of the MYC coding region determinant (CRD). In association with NMD1, plays a role in the rRNA quality control process during cell cycle progression. Associates, together with YBX1, on the MDR1 promoter. Together with NPM1, associates with rRNA. Binds DNA and RNA. This chain is DNA repair nuclease/redox regulator APEX1 (APEX1), found in Gorilla gorilla gorilla (Western lowland gorilla).